Reading from the N-terminus, the 669-residue chain is DNA ligase (669 aa).

Residue 35–39 coordinates NAD(+); it reads DFEYD. The interval 52–71 is disordered; the sequence is YPEWDSPDSPTHRVGSDKTE. Over residues 61-71 the composition is skewed to basic and acidic residues; sequence PTHRVGSDKTE. NAD(+)-binding positions include 84–85 and Glu115; that span reads SL. Catalysis depends on Lys117, which acts as the N6-AMP-lysine intermediate. NAD(+) is bound by residues Arg138, Glu175, Lys290, and Lys314. 4 residues coordinate Zn(2+): Cys408, Cys411, Cys426, and Cys432. A BRCT domain is found at 590–669; the sequence is PVSARLAGKT…EEEFLRLIEE (80 aa).

It belongs to the NAD-dependent DNA ligase family. LigA subfamily. Mg(2+) is required as a cofactor. Requires Mn(2+) as cofactor.

The enzyme catalyses NAD(+) + (deoxyribonucleotide)n-3'-hydroxyl + 5'-phospho-(deoxyribonucleotide)m = (deoxyribonucleotide)n+m + AMP + beta-nicotinamide D-nucleotide.. In terms of biological role, DNA ligase that catalyzes the formation of phosphodiester linkages between 5'-phosphoryl and 3'-hydroxyl groups in double-stranded DNA using NAD as a coenzyme and as the energy source for the reaction. It is essential for DNA replication and repair of damaged DNA. This Porphyromonas gingivalis (strain ATCC 33277 / DSM 20709 / CIP 103683 / JCM 12257 / NCTC 11834 / 2561) protein is DNA ligase.